Consider the following 114-residue polypeptide: Small ribosomal subunit protein uS17 (114 aa).

Belongs to the universal ribosomal protein uS17 family. In terms of assembly, part of the 30S ribosomal subunit.

Its function is as follows. One of the primary rRNA binding proteins, it binds specifically to the 5'-end of 16S ribosomal RNA. The protein is Small ribosomal subunit protein uS17 of Sulfolobus acidocaldarius (strain ATCC 33909 / DSM 639 / JCM 8929 / NBRC 15157 / NCIMB 11770).